Reading from the N-terminus, the 254-residue chain is Alcohol dehydrogenase 2 (254 aa).

NAD(+) is bound at residue 10–33; sequence FVAGLGGIGFDTSREIVKRGPKNL. Substrate is bound at residue serine 138. Residue tyrosine 151 is the Proton acceptor of the active site.

It belongs to the short-chain dehydrogenases/reductases (SDR) family. Homodimer.

The catalysed reaction is a primary alcohol + NAD(+) = an aldehyde + NADH + H(+). The enzyme catalyses a secondary alcohol + NAD(+) = a ketone + NADH + H(+). The sequence is that of Alcohol dehydrogenase 2 (Adh2) from Drosophila mojavensis (Fruit fly).